The primary structure comprises 519 residues: 6-phosphofructo-2-kinase/fructose-2,6-bisphosphatase 2 (519 aa).

Positions 1–17 (MSENSTFSTEDSCNSSY) are enriched in polar residues. A disordered region spans residues 1–22 (MSENSTFSTEDSCNSSYKPHAS). Residue Ser2 is modified to N-acetylserine. The tract at residues 2 to 251 (SENSTFSTED…VYYLMNIHVH (250 aa)) is 6-phosphofructo-2-kinase. A Phosphoserine; by PKA modification is found at Ser32. 48–56 (GLPARGKTY) lines the ATP pocket. Residues Arg81 and Arg105 each contribute to the beta-D-fructose 6-phosphate site. Residue Asp131 is part of the active site. Beta-D-fructose 6-phosphate contacts are provided by Thr133 and Arg139. The active site involves Cys161. An ATP-binding site is contributed by 170 to 175 (NILEVK). Lys175, Arg196, and Tyr200 together coordinate beta-D-fructose 6-phosphate. The interval 252–519 (PRTIYLCRHG…PKTQVSIPVV (268 aa)) is fructose-2,6-bisphosphatase. Arg259 is a binding site for beta-D-fructose 2,6-bisphosphate. The active-site Tele-phosphohistidine intermediate is the His260. Residues Asn266 and Gly272 each contribute to the beta-D-fructose 2,6-bisphosphate site. Residue Glu329 is the Proton donor/acceptor of the active site. Beta-D-fructose 2,6-bisphosphate-binding residues include Tyr340, Arg354, Lys358, Tyr369, Gln395, and Arg399. Residue 351 to 354 (FALR) coordinates ATP. ATP is bound by residues 395-399 (QAVMR) and Tyr431. Positions 448–493 (HRDKPTHNFPKSQTPVRMRRNSFTPLSSSNTIRRPRNYSVGSRPLK) are disordered. A compositionally biased stretch (polar residues) spans 456–479 (FPKSQTPVRMRRNSFTPLSSSNTI). Ser469 bears the Phosphoserine mark. Residue Thr471 is modified to Phosphothreonine. Position 478 is a phosphothreonine; by PKC (Thr478). A phosphoserine mark is found at Ser486 and Ser496. Positions 500 to 519 (ALDMQEGADQPKTQVSIPVV) are disordered. Polar residues predominate over residues 510-519 (PKTQVSIPVV).

It in the C-terminal section; belongs to the phosphoglycerate mutase family. In terms of assembly, homodimer. Forms a heterodimer with PFKFB3. In terms of processing, phosphorylation by AMPK stimulates activity. Highest levels in kidney; also found in heart, brain, spleen, lung, liver, skeletal muscle and testis.

It carries out the reaction beta-D-fructose 2,6-bisphosphate + H2O = beta-D-fructose 6-phosphate + phosphate. It catalyses the reaction beta-D-fructose 6-phosphate + ATP = beta-D-fructose 2,6-bisphosphate + ADP + H(+). Phosphorylation results in the activation of the kinase activity. In terms of biological role, synthesis and degradation of fructose 2,6-bisphosphate. The chain is 6-phosphofructo-2-kinase/fructose-2,6-bisphosphatase 2 (Pfkfb2) from Mus musculus (Mouse).